The following is a 245-amino-acid chain: tRNA (guanine-N(1)-)-methyltransferase (245 aa).

Residues Gly-114 and 133–138 (IGDYVL) contribute to the S-adenosyl-L-methionine site.

The protein belongs to the RNA methyltransferase TrmD family. Homodimer.

The protein resides in the cytoplasm. It catalyses the reaction guanosine(37) in tRNA + S-adenosyl-L-methionine = N(1)-methylguanosine(37) in tRNA + S-adenosyl-L-homocysteine + H(+). Its function is as follows. Specifically methylates guanosine-37 in various tRNAs. This Prochlorococcus marinus (strain MIT 9312) protein is tRNA (guanine-N(1)-)-methyltransferase.